Reading from the N-terminus, the 2245-residue chain is Myosin-J heavy chain (2245 aa).

The region spanning 25-77 (QEGAGVWIPDQELGWIGADVIEHSETSADQVLVRTEDDREVKIPLSKVFQKNP) is the Myosin N-terminal SH3-like domain. The Myosin motor domain maps to 81–821 (EGVDDLSFLS…QLASLEDMRL (741 aa)). Residue 174-181 (GESGAGKT) coordinates ATP. Residues 646 to 672 (FTQSPGGHPQGNGGPTSSNTKGTSGSS) are disordered. Over residues 660–672 (PTSSNTKGTSGSS) the composition is skewed to low complexity. The tract at residues 669 to 749 (SGSSSMKFLS…GFPTRRLLSE (81 aa)) is actin-binding. IQ domains lie at 824-851 (LDRSATVIQKRWKGYLYRKRYKQLRDAS), 872-901 (RTHSAILIQKVWRAHRDRVQYQKIRDASLQ), and 943-972 (KLRGIILIQARWRMKLAKRVYIQLRAEARS). Residues 973-1812 (LRTVQEQKNK…NYHMLEDRME (840 aa)) adopt a coiled-coil conformation. The disordered stretch occupies residues 1504–1524 (KKQLTQLQQQHEQSSTQLLLA). The span at 1506 to 1523 (QLTQLQQQHEQSSTQLLL) shows a compositional bias: low complexity. In terms of domain architecture, Dilute spans 1969–2188 (IDFIDQLQQS…IASICPPNKS (220 aa)).

This sequence belongs to the TRAFAC class myosin-kinesin ATPase superfamily. Myosin family. In terms of assembly, homodimer that associates with six light chains.

The protein localises to the contractile vacuole. Processive motor protein that can move over long distances along F-actin without disassociating; processiveness depends on high physiological Mg(2+) concentrations. Presents a high actin affinity in the presence of ADP, fast ATP hydrolysis, and a high steady-state ATPase activity in the presence of actin that is rate limited by ADP release. Physiological decrease of free Mg(2+) ions leads to an increased rate of ADP release and shortening of the fraction of time it spends in the strong acting binding states. In Dictyostelium discoideum (Social amoeba), this protein is Myosin-J heavy chain (myoJ).